A 78-amino-acid chain; its full sequence is Small ribosomal subunit protein bS16c (78 aa).

This sequence belongs to the bacterial ribosomal protein bS16 family.

It is found in the plastid. It localises to the chloroplast. This is Small ribosomal subunit protein bS16c from Panax ginseng (Korean ginseng).